Here is a 327-residue protein sequence, read N- to C-terminus: tRNA N6-adenosine threonylcarbamoyltransferase (327 aa).

Fe cation-binding residues include His109 and His113. Residues 132 to 136, Asp165, Gly178, Asp182, and Asn268 contribute to the substrate site; that span reads MVSGG. Position 296 (Asp296) interacts with Fe cation.

It belongs to the KAE1 / TsaD family. Forms a hexamer composed of two TsaB, TsaD and TsaE trimers. The cofactor is Fe(2+).

The protein localises to the cytoplasm. It catalyses the reaction L-threonylcarbamoyladenylate + adenosine(37) in tRNA = N(6)-L-threonylcarbamoyladenosine(37) in tRNA + AMP + H(+). Functionally, required for the formation of a threonylcarbamoyl group on adenosine at position 37 (t(6)A37) in tRNAs that read codons beginning with adenine. Is involved in the transfer of the threonylcarbamoyl moiety of threonylcarbamoyl-AMP (TC-AMP) to the N6 group of A37, together with TsaE and TsaB. TsaD likely plays a direct catalytic role in this reaction. The sequence is that of tRNA N6-adenosine threonylcarbamoyltransferase from Thermotoga maritima (strain ATCC 43589 / DSM 3109 / JCM 10099 / NBRC 100826 / MSB8).